A 359-amino-acid polypeptide reads, in one-letter code: E3 ubiquitin-protein ligase RNF146 (359 aa).

The segment at 36 to 74 (CAICLQTCVHPVSLPCKHVFCYLCVKGASWLGKRCALCR) adopts an RING-type zinc-finger fold. Residues Lys-84 and Lys-94 each participate in a glycyl lysine isopeptide (Lys-Gly) (interchain with G-Cter in ubiquitin) cross-link. The WWE domain occupies 91–167 (EELKAASRGN…EHGRRRKIKR (77 aa)). Residues Tyr-107, Arg-110, and Trp-114 each coordinate a glycoprotein. Lys-130 participates in a covalent cross-link: Glycyl lysine isopeptide (Lys-Gly) (interchain with G-Cter in ubiquitin). A glycoprotein contacts are provided by Tyr-144, Gln-153, Arg-163, and Lys-175. A Glycyl lysine isopeptide (Lys-Gly) (interchain with G-Cter in ubiquitin) cross-link involves residue Lys-175. The tract at residues 259–359 (ERSHRGEGEE…PDGQCTVTEV (101 aa)) is disordered. Positions 284-298 (SVEETESDASSDSED) are enriched in acidic residues. 2 positions are modified to phosphoserine: Ser-290 and Ser-294. The segment covering 306 to 322 (HSLTQQRLLVPNANQTV) has biased composition (polar residues).

Can form homooligomers. Interacts with PARsylated AXIN1, AXIN2, BLZF1, CASC3, H1-2, IPO7, LIG3, NCL, PARP1, XRCC1, XRCC5 and XRCC6. Interacts with DDB1, DHX15, IQGAP1, LRPPRC, PARP2, PRKDC, RUVBL2, TNKS1 and TNKS2. Binding often leads to interactor ubiquitination, in the presence of the appropriate E1 and E2 enzymes, and proteasomal degradation. Ubiquitinated; autoubiquitinated. Autoubiquitination is enhanced upon poly(ADP-ribose)-binding.

The protein localises to the cytoplasm. The protein resides in the cytosol. It is found in the nucleus. The catalysed reaction is S-ubiquitinyl-[E2 ubiquitin-conjugating enzyme]-L-cysteine + [acceptor protein]-L-lysine = [E2 ubiquitin-conjugating enzyme]-L-cysteine + N(6)-ubiquitinyl-[acceptor protein]-L-lysine.. The protein operates within protein modification; protein ubiquitination. Its function is as follows. E3 ubiquitin-protein ligase that specifically binds poly-ADP-ribosylated (PARsylated) proteins and mediates their ubiquitination and subsequent degradation. May regulate many important biological processes, such as cell survival and DNA damage response. Acts as an activator of the Wnt signaling pathway by mediating the ubiquitination of PARsylated AXIN1 and AXIN2, 2 key components of the beta-catenin destruction complex. Acts in cooperation with tankyrase proteins (TNKS and TNKS2), which mediate PARsylation of target proteins AXIN1, AXIN2, BLZF1, CASC3, TNKS and TNKS2. Recognizes and binds tankyrase-dependent PARsylated proteins via its WWE domain and mediates their ubiquitination, leading to their degradation. Different ubiquitin linkage types have been observed: TNKS2 undergoes ubiquitination at 'Lys-48' and 'Lys-63', while AXIN1 is only ubiquitinated at 'Lys-48'. May regulate TNKS and TNKS2 subcellular location, preventing aggregation at a centrosomal location. Neuroprotective protein. Protects the brain against N-methyl-D-aspartate (NMDA) receptor-mediated glutamate excitotoxicity and ischemia, by interfering with PAR-induced cell death, called parthanatos. Prevents nuclear translocation of AIFM1 in a PAR-binding dependent manner. Does not affect PARP1 activation. Protects against cell death induced by DNA damaging agents, such as N-methyl-N-nitro-N-nitrosoguanidine (MNNG) and rescues cells from G1 arrest. Promotes cell survival after gamma-irradiation. Facilitates DNA repair. In Ailuropoda melanoleuca (Giant panda), this protein is E3 ubiquitin-protein ligase RNF146 (RNF146).